A 446-amino-acid polypeptide reads, in one-letter code: Glycerol-3-phosphate acyltransferase 3 (446 aa).

3 helical membrane-spanning segments follow: residues 25–45, 142–162, and 164–184; these read LPSA…VLVK, LRLT…LLPL, and FTLA…VGQL. The HXXXXD motif signature appears at 232-237; that stretch reads HTSPID. Residues 352–372 traverse the membrane as a helical segment; it reads IVSYLLRIMTSWAIVCHVWYM. The segment at 418–446 is disordered; that stretch reads FKEEQQKNYSKMLVRNGSQGNLPAGTESD.

The protein belongs to the 1-acyl-sn-glycerol-3-phosphate acyltransferase family.

It localises to the endoplasmic reticulum membrane. The catalysed reaction is sn-glycerol 3-phosphate + an acyl-CoA = a 1-acyl-sn-glycero-3-phosphate + CoA. It carries out the reaction a 1-acyl-sn-glycero-3-phosphate + an acyl-CoA = a 1,2-diacyl-sn-glycero-3-phosphate + CoA. It catalyses the reaction dodecanoyl-CoA + sn-glycerol 3-phosphate = 1-dodecanoyl-sn-glycerol 3-phosphate + CoA. The enzyme catalyses sn-glycerol 3-phosphate + hexadecanoyl-CoA = 1-hexadecanoyl-sn-glycero-3-phosphate + CoA. The catalysed reaction is sn-glycerol 3-phosphate + (9Z)-octadecenoyl-CoA = 1-(9Z-octadecenoyl)-sn-glycero-3-phosphate + CoA. It carries out the reaction (9Z,12Z)-octadecadienoyl-CoA + sn-glycerol 3-phosphate = 1-(9Z,12Z)-octadecadienoyl-sn-glycero-3-phosphate + CoA. It catalyses the reaction 1-tetradecanoyl-sn-glycerol 3-phosphate + (9Z)-octadecenoyl-CoA = 1-tetradecanoyl-2-(9Z)-octadecenoyl-sn-glycero-3-phosphate + CoA. The enzyme catalyses 1-hexadecanoyl-sn-glycero-3-phosphate + (9Z)-octadecenoyl-CoA = 1-hexadecanoyl-2-(9Z-octadecenoyl)-sn-glycero-3-phosphate + CoA. The catalysed reaction is 1-(9Z-octadecenoyl)-sn-glycero-3-phosphate + (9Z)-octadecenoyl-CoA = 1,2-di-(9Z-octadecenoyl)-sn-glycero-3-phosphate + CoA. It carries out the reaction 1-(6Z,9Z,12Z-octadecatrienoyl)-sn-glycero-3-phosphate + (9Z)-octadecenoyl-CoA = (6Z,9Z,12Z)-octadecatrienoyl-2-(9Z)-octadecenoyl-sn-glycero-3-phosphate + CoA. It catalyses the reaction 1-(9Z,12Z,15Z)-octadecatrienoyl-sn-glycero-3-phosphate + (9Z)-octadecenoyl-CoA = 1-(9Z,12Z,15Z)-octadecatrienoyl-2-(9Z)-octadecenoyl-sn-glycero-3-phosphate + CoA. The enzyme catalyses 1-(9Z-octadecenoyl)-sn-glycero-3-phosphate + tetradecanoyl-CoA = 1-(9Z)-octadecenoyl-2-tetradecanoyl-sn-glycero-3-phosphate + CoA. The catalysed reaction is 1-(9Z-octadecenoyl)-sn-glycero-3-phosphate + hexadecanoyl-CoA = 1-(9Z)-octadecenoyl-2-hexadecanoyl-sn-glycero-3-phosphate + CoA. It carries out the reaction 1-(9Z-octadecenoyl)-sn-glycero-3-phosphate + octadecanoyl-CoA = 1-(9Z-octadecenoyl)-2-octadecanoyl-sn-glycero-3-phosphate + CoA. It catalyses the reaction 1-(9Z-octadecenoyl)-sn-glycero-3-phosphate + (9Z,12Z)-octadecadienoyl-CoA = 1-(9Z)-octadecenoyl-2-(9Z,12Z)-octadecadienoyl-sn-glycero-3-phosphate + CoA. The enzyme catalyses 1-(5Z,8Z,11Z,14Z-eicosatetraenoyl)-sn-glycero-3-phosphate + (9Z)-octadecenoyl-CoA = 1-(5Z,8Z,11Z,14Z)-eicosatetraenoyl-2-(9Z)-octadecenoyl-sn-glycero-3-phosphate + CoA. It participates in glycerolipid metabolism; triacylglycerol biosynthesis. It functions in the pathway phospholipid metabolism; CDP-diacylglycerol biosynthesis; CDP-diacylglycerol from sn-glycerol 3-phosphate: step 1/3. Its function is as follows. Converts glycerol-3-phosphate to 1-acyl-sn-glycerol-3-phosphate (lysophosphatidic acid or LPA) by incorporating an acyl moiety at the sn-1 position of the glycerol backbone. Also converts LPA into 1,2-diacyl-sn-glycerol-3-phosphate (phosphatidic acid or PA) by incorporating an acyl moiety at the sn-2 position of the glycerol backbone. Protects cells against lipotoxicity. The chain is Glycerol-3-phosphate acyltransferase 3 from Gallus gallus (Chicken).